The chain runs to 311 residues: Ribonuclease Z (311 aa).

Residues H63, H65, D67, H68, H141, D212, and H270 each coordinate Zn(2+). D67 functions as the Proton acceptor in the catalytic mechanism.

It belongs to the RNase Z family. Homodimer. It depends on Zn(2+) as a cofactor.

It catalyses the reaction Endonucleolytic cleavage of RNA, removing extra 3' nucleotides from tRNA precursor, generating 3' termini of tRNAs. A 3'-hydroxy group is left at the tRNA terminus and a 5'-phosphoryl group is left at the trailer molecule.. In terms of biological role, zinc phosphodiesterase, which displays some tRNA 3'-processing endonuclease activity. Probably involved in tRNA maturation, by removing a 3'-trailer from precursor tRNA. The sequence is that of Ribonuclease Z from Lactiplantibacillus plantarum (strain ATCC BAA-793 / NCIMB 8826 / WCFS1) (Lactobacillus plantarum).